Consider the following 420-residue polypeptide: Pregnancy-associated glycoprotein 2 (420 aa).

A signal peptide spans methionine 1–cysteine 15. N-linked (GlcNAc...) asparagine glycans are attached at residues asparagine 56 and asparagine 79. Residues tyrosine 76–alanine 417 form the Peptidase A1 domain. Aspartate 94 is a catalytic residue. 2 disulfides stabilise this stretch: cysteine 107–cysteine 112 and cysteine 268–cysteine 272. Residue aspartate 277 is part of the active site. An intrachain disulfide couples cysteine 341 to cysteine 376.

Belongs to the peptidase A1 family. In terms of tissue distribution, expressed throughout the chorion, with the signal localized exclusively over the trophectoderm.

It localises to the secreted. The protein localises to the extracellular space. This is Pregnancy-associated glycoprotein 2 (PAG2) from Sus scrofa (Pig).